Here is an 873-residue protein sequence, read N- to C-terminus: Valine--tRNA ligase (873 aa).

The short motif at proline 43 to histidine 53 is the 'HIGH' region element. Positions lysine 532–serine 536 match the 'KMSKS' region motif. Lysine 535 provides a ligand contact to ATP. The stretch at leucine 802–lysine 873 forms a coiled coil.

Belongs to the class-I aminoacyl-tRNA synthetase family. ValS type 1 subfamily. In terms of assembly, monomer.

The protein resides in the cytoplasm. It carries out the reaction tRNA(Val) + L-valine + ATP = L-valyl-tRNA(Val) + AMP + diphosphate. Its function is as follows. Catalyzes the attachment of valine to tRNA(Val). As ValRS can inadvertently accommodate and process structurally similar amino acids such as threonine, to avoid such errors, it has a 'posttransfer' editing activity that hydrolyzes mischarged Thr-tRNA(Val) in a tRNA-dependent manner. The chain is Valine--tRNA ligase from Parabacteroides distasonis (strain ATCC 8503 / DSM 20701 / CIP 104284 / JCM 5825 / NCTC 11152).